The sequence spans 176 residues: NAD(P)H-quinone oxidoreductase subunit 6, chloroplastic (176 aa).

5 consecutive transmembrane segments (helical) span residues 10–30, 32–52, 61–81, 92–112, and 152–172; these read FLLV…VLLT, PIFS…FFSL, AQLL…VMFM, LWTV…ISLI, and FFLP…GAIA.

This sequence belongs to the complex I subunit 6 family. NDH is composed of at least 16 different subunits, 5 of which are encoded in the nucleus.

The protein localises to the plastid. It is found in the chloroplast thylakoid membrane. The catalysed reaction is a plastoquinone + NADH + (n+1) H(+)(in) = a plastoquinol + NAD(+) + n H(+)(out). It carries out the reaction a plastoquinone + NADPH + (n+1) H(+)(in) = a plastoquinol + NADP(+) + n H(+)(out). Its function is as follows. NDH shuttles electrons from NAD(P)H:plastoquinone, via FMN and iron-sulfur (Fe-S) centers, to quinones in the photosynthetic chain and possibly in a chloroplast respiratory chain. The immediate electron acceptor for the enzyme in this species is believed to be plastoquinone. Couples the redox reaction to proton translocation, and thus conserves the redox energy in a proton gradient. This chain is NAD(P)H-quinone oxidoreductase subunit 6, chloroplastic (ndhG), found in Oenothera argillicola (Appalachian evening primrose).